We begin with the raw amino-acid sequence, 266 residues long: Glucosamine-6-phosphate deaminase (266 aa).

The active-site Proton acceptor; for enolization step is the Asp-72. The For ring-opening step role is filled by Asp-141. Residue His-143 is the Proton acceptor; for ring-opening step of the active site. Glu-148 (for ring-opening step) is an active-site residue.

It belongs to the glucosamine/galactosamine-6-phosphate isomerase family. NagB subfamily. As to quaternary structure, homohexamer.

It catalyses the reaction alpha-D-glucosamine 6-phosphate + H2O = beta-D-fructose 6-phosphate + NH4(+). Its pathway is amino-sugar metabolism; N-acetylneuraminate degradation; D-fructose 6-phosphate from N-acetylneuraminate: step 5/5. With respect to regulation, allosterically activated by N-acetylglucosamine 6-phosphate (GlcNAc6P). Its function is as follows. Catalyzes the reversible isomerization-deamination of glucosamine 6-phosphate (GlcN6P) to form fructose 6-phosphate (Fru6P) and ammonium ion. The protein is Glucosamine-6-phosphate deaminase of Salmonella typhi.